Reading from the N-terminus, the 102-residue chain is Small ribosomal subunit protein uS10 (102 aa).

It belongs to the universal ribosomal protein uS10 family. As to quaternary structure, part of the 30S ribosomal subunit.

Involved in the binding of tRNA to the ribosomes. The sequence is that of Small ribosomal subunit protein uS10 from Geobacter sulfurreducens (strain ATCC 51573 / DSM 12127 / PCA).